Consider the following 479-residue polypeptide: RAC-gamma serine/threonine-protein kinase (479 aa).

An N-acetylserine modification is found at S2. The PH domain maps to 5–107 (TIVKEDWVQK…WTEAIQAVAD (103 aa)). A disulfide bond links C59 and C76. The 258-residue stretch at 148-405 (FDYLKLLGKG…PKEIMRHSFF (258 aa)) folds into the Protein kinase domain. ATP-binding positions include 154–162 (LGKGTFGKV) and K177. D271 serves as the catalytic Proton acceptor. The cysteines at positions 293 and 307 are disulfide-linked. O-linked (GlcNAc) threonine glycosylation occurs at T302. T305 is subject to Phosphothreonine; by PDPK1. T309 carries an O-linked (GlcNAc) threonine glycan. The AGC-kinase C-terminal domain occupies 406 to 479 (SGVNWQDVYD…QFSYSASGRE (74 aa)). Residues 446-479 (ITPPEKDDDDGMDCMDNERRPHFPQFSYSASGRE) form a disordered region. A Phosphothreonine modification is found at T447. Residues 451 to 460 (KDDDDGMDCM) show a composition bias toward acidic residues. At S472 the chain carries Phosphoserine; by PKC/PRKCZ. The O-linked (GlcNAc) serine; alternate glycan is linked to S472.

This sequence belongs to the protein kinase superfamily. AGC Ser/Thr protein kinase family. RAC subfamily. In terms of assembly, interacts (via PH domain) with TCL1A; this enhances AKT3 phosphorylation and activation. Interacts with TRAF6. Interacts with KCTD20. Interacts with BTBD10. In terms of processing, phosphorylation on Thr-305 and Ser-472 is required for full activity. Phosphorylation of the activation loop at Thr-305 by PDPK1/PDK1 is a prerequisite for full activation. Phosphorylation at Ser-472 by mTORC2 in response to growth factors plays a key role in AKT1 activation by facilitating subsequent phosphorylation of the activation loop by PDPK1/PDK1. Post-translationally, ubiquitinated. When fully phosphorylated and translocated into the nucleus, undergoes 'Lys-48'-polyubiquitination catalyzed by TTC3, leading to its degradation by the proteasome. O-GlcNAcylation at Thr-302 and Thr-309 inhibits activating phosphorylation at Thr-305 via disrupting the interaction between AKT and PDPK1/PDK1.

The protein localises to the nucleus. The protein resides in the cytoplasm. It localises to the membrane. The catalysed reaction is L-seryl-[protein] + ATP = O-phospho-L-seryl-[protein] + ADP + H(+). The enzyme catalyses L-threonyl-[protein] + ATP = O-phospho-L-threonyl-[protein] + ADP + H(+). With respect to regulation, two specific sites, one in the kinase domain (Thr-305) and the other in the C-terminal regulatory region (Ser-472), need to be phosphorylated for its full activation. IGF-1 leads to the activation of AKT3, which may play a role in regulating cell survival. Its function is as follows. AKT3 is one of 3 closely related serine/threonine-protein kinases (AKT1, AKT2 and AKT3) called the AKT kinase, and which regulate many processes including metabolism, proliferation, cell survival, growth and angiogenesis. This is mediated through serine and/or threonine phosphorylation of a range of downstream substrates. Over 100 substrate candidates have been reported so far, but for most of them, no isoform specificity has been reported. AKT3 is the least studied AKT isoform. It plays an important role in brain development and is crucial for the viability of malignant glioma cells. AKT3 isoform may also be the key molecule in up-regulation and down-regulation of MMP13 via IL13. Required for the coordination of mitochondrial biogenesis with growth factor-induced increases in cellular energy demands. Down-regulation by RNA interference reduces the expression of the phosphorylated form of BAD, resulting in the induction of caspase-dependent apoptosis. In Rattus norvegicus (Rat), this protein is RAC-gamma serine/threonine-protein kinase (Akt3).